The primary structure comprises 156 residues: Hemerythrin-like protein (156 aa).

Residues H54, H84, E88, H109, H113, H142, and D147 each coordinate Fe cation.

This sequence belongs to the hemerythrin family.

In terms of biological role, oxygen-binding protein. The oxygen-binding site contains two iron atoms. The sequence is that of Hemerythrin-like protein from Nematostella vectensis (Starlet sea anemone).